The sequence spans 610 residues: MWTFPVEYDVIVIGAGHAGCEAAYCAAKMGASVLLLTSNLDTIAKLSCNPAVGGIGKGHIVREIDALGGVMAEVTDLSGIQFRILNQTKGPAVRAPRAQVDKQLYHIHMKQLLEQVPGLHIMQGTAEALLDDGEKVLGVSTKEGWAYSGETVVLSSGTFMRGLIHIGTQNFSGGRLGDAASLGLSKDLKRLGFPLGRLKTGTPARLLSSSIDFSIMEEQPGDQNVCFVHREEAFVPKLPQVSCHITYTTDKTKDLIANNLHRSALYGGRIEGVGPRYCPSIEDKIVKFADKDRHHIFIEPEGLNTREVYVNGLSTSMPFDVQYEIIRSVAGLENAVITRPAYAIEYDYIQGNVILPSLESKILEGLFLCGQINGTTGYEEAAAQGLIAGVNAVNKVLHRPAFIPSRQESYIGVMLDDLTTQVLDEPYRMFTSRAEHRLLLRQDNAGMRLSHYGHALGLLSSERYAMFQKQKNCIEHEKERLAKTFRKYGDSIVPLTKILCRPEVSYQQLLTEFPEDVKDWGPIIGASLEMEIKYSGYISRQQTLIRSMEKAENTLIPEGIDYHSISALSLEAREKLSKFTPRTIGSAARISGISVADIQVLMVSLKKDAY.

14 to 19 (GAGHAG) serves as a coordination point for FAD. 274-288 (GPRYCPSIEDKIVKF) serves as a coordination point for NAD(+).

It belongs to the MnmG family. As to quaternary structure, homodimer. Heterotetramer of two MnmE and two MnmG subunits. Requires FAD as cofactor.

The protein resides in the cytoplasm. Functionally, NAD-binding protein involved in the addition of a carboxymethylaminomethyl (cmnm) group at the wobble position (U34) of certain tRNAs, forming tRNA-cmnm(5)s(2)U34. The protein is tRNA uridine 5-carboxymethylaminomethyl modification enzyme MnmG of Chlamydia muridarum (strain MoPn / Nigg).